A 408-amino-acid chain; its full sequence is Imidazolonepropionase (408 aa).

Residues H73 and H75 each contribute to the Fe(3+) site. Positions 73 and 75 each coordinate Zn(2+). 4-imidazolone-5-propanoate contacts are provided by R82, Y145, and H178. N-formimidoyl-L-glutamate is bound at residue Y145. Residue H243 participates in Fe(3+) binding. Position 243 (H243) interacts with Zn(2+). A 4-imidazolone-5-propanoate-binding site is contributed by Q246. D318 is a binding site for Fe(3+). D318 provides a ligand contact to Zn(2+). N-formimidoyl-L-glutamate-binding residues include N320 and G322. S323 contributes to the 4-imidazolone-5-propanoate binding site.

It belongs to the metallo-dependent hydrolases superfamily. HutI family. Zn(2+) serves as cofactor. Requires Fe(3+) as cofactor.

The protein resides in the cytoplasm. The catalysed reaction is 4-imidazolone-5-propanoate + H2O = N-formimidoyl-L-glutamate. It participates in amino-acid degradation; L-histidine degradation into L-glutamate; N-formimidoyl-L-glutamate from L-histidine: step 3/3. Its function is as follows. Catalyzes the hydrolytic cleavage of the carbon-nitrogen bond in imidazolone-5-propanoate to yield N-formimidoyl-L-glutamate. It is the third step in the universal histidine degradation pathway. The chain is Imidazolonepropionase from Shewanella sp. (strain W3-18-1).